The following is a 310-amino-acid chain: Putative S-adenosyl-L-methionine-dependent methyltransferase MMAR_0356 (310 aa).

S-adenosyl-L-methionine is bound by residues D137 and 166-167 (DL).

It belongs to the UPF0677 family.

In terms of biological role, exhibits S-adenosyl-L-methionine-dependent methyltransferase activity. In Mycobacterium marinum (strain ATCC BAA-535 / M), this protein is Putative S-adenosyl-L-methionine-dependent methyltransferase MMAR_0356.